A 215-amino-acid chain; its full sequence is Protein FAM167A (215 aa).

Disordered stretches follow at residues 1 to 26 (MSVP…PPDD) and 63 to 109 (RPAA…LTTG). A coiled-coil region spans residues 124 to 157 (LRKELAEMRLQDQQLARQLMRLRGDINKLKIEQT).

It belongs to the FAM167 (SEC) family.

The sequence is that of Protein FAM167A (Fam167a) from Mus musculus (Mouse).